The sequence spans 140 residues: Nucleoside diphosphate kinase (140 aa).

Residues lysine 11, phenylalanine 59, arginine 87, threonine 93, arginine 104, and asparagine 114 each coordinate ATP. Residue histidine 117 is the Pros-phosphohistidine intermediate of the active site.

Belongs to the NDK family. Homotetramer. Mg(2+) is required as a cofactor.

It is found in the cytoplasm. It catalyses the reaction a 2'-deoxyribonucleoside 5'-diphosphate + ATP = a 2'-deoxyribonucleoside 5'-triphosphate + ADP. It carries out the reaction a ribonucleoside 5'-diphosphate + ATP = a ribonucleoside 5'-triphosphate + ADP. Major role in the synthesis of nucleoside triphosphates other than ATP. The ATP gamma phosphate is transferred to the NDP beta phosphate via a ping-pong mechanism, using a phosphorylated active-site intermediate. This chain is Nucleoside diphosphate kinase, found in Francisella philomiragia subsp. philomiragia (strain ATCC 25017 / CCUG 19701 / FSC 153 / O#319-036).